Here is a 93-residue protein sequence, read N- to C-terminus: Pyrimidine/purine nucleoside phosphorylase (93 aa).

The protein belongs to the nucleoside phosphorylase PpnP family.

It catalyses the reaction a purine D-ribonucleoside + phosphate = a purine nucleobase + alpha-D-ribose 1-phosphate. The catalysed reaction is adenosine + phosphate = alpha-D-ribose 1-phosphate + adenine. It carries out the reaction cytidine + phosphate = cytosine + alpha-D-ribose 1-phosphate. The enzyme catalyses guanosine + phosphate = alpha-D-ribose 1-phosphate + guanine. It catalyses the reaction inosine + phosphate = alpha-D-ribose 1-phosphate + hypoxanthine. The catalysed reaction is thymidine + phosphate = 2-deoxy-alpha-D-ribose 1-phosphate + thymine. It carries out the reaction uridine + phosphate = alpha-D-ribose 1-phosphate + uracil. The enzyme catalyses xanthosine + phosphate = alpha-D-ribose 1-phosphate + xanthine. Its function is as follows. Catalyzes the phosphorolysis of diverse nucleosides, yielding D-ribose 1-phosphate and the respective free bases. Can use uridine, adenosine, guanosine, cytidine, thymidine, inosine and xanthosine as substrates. Also catalyzes the reverse reactions. This Cellvibrio japonicus (strain Ueda107) (Pseudomonas fluorescens subsp. cellulosa) protein is Pyrimidine/purine nucleoside phosphorylase.